A 441-amino-acid chain; its full sequence is Protein kinase C and casein kinase substrate in neurons protein 1 (441 aa).

2 positions are modified to phosphoserine: Ser2 and Ser76. The F-BAR domain occupies 10-280 (EEITDSFWEV…AIRGADAQED (271 aa)). Positions 23–272 (KRTVKRIDDG…HVYRELEQAI (250 aa)) form a coiled coil. Thr181 carries the post-translational modification Phosphothreonine. Residues 297 to 380 (PQFEEWNPDL…ANGGANPFED (84 aa)) form a disordered region. Basic and acidic residues predominate over residues 311–321 (AKKEKQPKKAE). A compositionally biased stretch (polar residues) spans 324–355 (TLSNATGAVESTSQAGDRGSVSSYDRGQTYAT). Ser343, Ser345, Ser346, Ser358, and Ser362 each carry phosphoserine. The SH3 domain occupies 382–441 (AKGVRVRALYDYDGQEQDELSFKAGDELTKLGEEDEQGWCRGRLDSGQLGLYPANYVEAI). A Phosphotyrosine modification is found at Tyr391. Residues Ser402 and Ser427 each carry the phosphoserine modification.

Belongs to the PACSIN family. Homodimer. May form heterooligomers with other PACSINs. Interacts with both COBL and DBNL. Identified in a complex composed of COBL, PACSIN1 and WASL. Interacts with EHD3. Interacts (via SH3 domain) with SYNJ1 and WASL. Interacts (via SH3 domain) with DNM1; the interaction is reduced by DNM1 phosphorylation. Interacts with DNM2 and DNM3. Interacts with MAPT. Interacts with EHD1. Interacts with TRPV4. Post-translationally, phosphorylated by casein kinase 2 (CK2) and protein kinase C (PKC). Highly expressed in brain. Detected in hippocampus and dorsal root ganglion neurons. Detected in rod photoreceptor terminals in the outer plexiform layer of the retina (at protein level). In CNS neurons, high levels in the pyramidal cells of the hippocampus, Purkinje cells of the cerebellum and large neurons of the cortex and brain stem.

Its subcellular location is the cytoplasm. It is found in the cell projection. The protein resides in the synapse. It localises to the synaptosome. The protein localises to the ruffle membrane. Its subcellular location is the membrane. It is found in the cytoplasmic vesicle membrane. The protein resides in the cytosol. It localises to the cell membrane. Functionally, binds to membranes via its F-BAR domain and mediates membrane tubulation. Plays a role in the reorganization of the microtubule cytoskeleton via its interaction with MAPT; this decreases microtubule stability and inhibits MAPT-induced microtubule polymerization. Plays a role in cellular transport processes by recruiting DNM1, DNM2 and DNM3 to membranes. Plays a role in the reorganization of the actin cytoskeleton and in neuron morphogenesis via its interaction with COBL and WASL, and by recruiting COBL to the cell cortex. Plays a role in the regulation of neurite formation, neurite branching and the regulation of neurite length. Required for normal synaptic vesicle endocytosis; this process retrieves previously released neurotransmitters to accommodate multiple cycles of neurotransmission. Required for normal excitatory and inhibitory synaptic transmission. The polypeptide is Protein kinase C and casein kinase substrate in neurons protein 1 (Pacsin1) (Mus musculus (Mouse)).